The sequence spans 243 residues: Ubiquinone/menaquinone biosynthesis C-methyltransferase UbiE (243 aa).

S-adenosyl-L-methionine is bound by residues Thr69, Asp90, and 116–117 (DA).

Belongs to the class I-like SAM-binding methyltransferase superfamily. MenG/UbiE family.

It carries out the reaction a 2-demethylmenaquinol + S-adenosyl-L-methionine = a menaquinol + S-adenosyl-L-homocysteine + H(+). It catalyses the reaction a 2-methoxy-6-(all-trans-polyprenyl)benzene-1,4-diol + S-adenosyl-L-methionine = a 5-methoxy-2-methyl-3-(all-trans-polyprenyl)benzene-1,4-diol + S-adenosyl-L-homocysteine + H(+). It participates in quinol/quinone metabolism; menaquinone biosynthesis; menaquinol from 1,4-dihydroxy-2-naphthoate: step 2/2. The protein operates within cofactor biosynthesis; ubiquinone biosynthesis. In terms of biological role, methyltransferase required for the conversion of demethylmenaquinol (DMKH2) to menaquinol (MKH2) and the conversion of 2-polyprenyl-6-methoxy-1,4-benzoquinol (DDMQH2) to 2-polyprenyl-3-methyl-6-methoxy-1,4-benzoquinol (DMQH2). The chain is Ubiquinone/menaquinone biosynthesis C-methyltransferase UbiE from Cupriavidus taiwanensis (strain DSM 17343 / BCRC 17206 / CCUG 44338 / CIP 107171 / LMG 19424 / R1) (Ralstonia taiwanensis (strain LMG 19424)).